A 505-amino-acid chain; its full sequence is Aminoaldehyde dehydrogenase 1a (505 aa).

Residue D101 coordinates Na(+). Residues 161–163 (TPW) and 187–190 (KPSE) contribute to the NAD(+) site. L191 is a Na(+) binding site. NAD(+)-binding positions include 241–244 (SFET) and E262. Catalysis depends on E262, which acts as the Proton acceptor. The active-site Nucleophile is C296. 2 residues coordinate NAD(+): E395 and W461.

The protein belongs to the aldehyde dehydrogenase family. As to quaternary structure, forms homodimers.

The catalysed reaction is 4-aminobutanal + NAD(+) + H2O = 4-aminobutanoate + NADH + 2 H(+). The enzyme catalyses 3-aminopropanal + NAD(+) + H2O = beta-alanine + NADH + 2 H(+). It carries out the reaction 4-(trimethylamino)butanal + NAD(+) + H2O = 4-(trimethylamino)butanoate + NADH + 2 H(+). It catalyses the reaction 4-guanidinobutanal + NAD(+) + H2O = 4-guanidinobutanoate + NADH + 2 H(+). The catalysed reaction is betaine aldehyde + NAD(+) + H2O = glycine betaine + NADH + 2 H(+). It functions in the pathway amine and polyamine biosynthesis; betaine biosynthesis via choline pathway; betaine from betaine aldehyde: step 1/1. Functionally, dehydrogenase that catalyzes the oxidation of several aminoaldehydes. Metabolizes and detoxifies aldehyde products of polyamine degradation to non-toxic amino acids. Catalyzes the oxidation of 4-aminobutanal and 3-aminopropanal to 4-aminobutanoate and beta-alanine, respectively. Catalyzes the oxidation of 4-(trimethylamino)butanal and 4-guanidinobutanal to 4-trimethylammoniobutanoate and 4-guanidinobutanoate, respectively. Catalyzes the oxidation of betaine aldehyde to glycine betaine. In terms of biological role, dehydrogenase that catalyzes the oxidation of several aminoaldehydes. Catalyzes the oxidation of betaine aldehyde to glycine betaine. Catalyzes the oxidation of 4-(trimethylamino)butanal to 4-trimethylammoniobutanoate. This Zea mays (Maize) protein is Aminoaldehyde dehydrogenase 1a.